Consider the following 264-residue polypeptide: Thymidylate synthase (264 aa).

Arg21 is a binding site for dUMP. His51 contributes to the (6R)-5,10-methylene-5,6,7,8-tetrahydrofolate binding site. 126 to 127 (RR) contributes to the dUMP binding site. Cys146 acts as the Nucleophile in catalysis. Residues 166–169 (RSCD), Asn177, and 207–209 (HLY) each bind dUMP. Asp169 lines the (6R)-5,10-methylene-5,6,7,8-tetrahydrofolate pocket. Ala263 provides a ligand contact to (6R)-5,10-methylene-5,6,7,8-tetrahydrofolate.

This sequence belongs to the thymidylate synthase family. Bacterial-type ThyA subfamily. In terms of assembly, homodimer.

It localises to the cytoplasm. It carries out the reaction dUMP + (6R)-5,10-methylene-5,6,7,8-tetrahydrofolate = 7,8-dihydrofolate + dTMP. Its pathway is pyrimidine metabolism; dTTP biosynthesis. In terms of biological role, catalyzes the reductive methylation of 2'-deoxyuridine-5'-monophosphate (dUMP) to 2'-deoxythymidine-5'-monophosphate (dTMP) while utilizing 5,10-methylenetetrahydrofolate (mTHF) as the methyl donor and reductant in the reaction, yielding dihydrofolate (DHF) as a by-product. This enzymatic reaction provides an intracellular de novo source of dTMP, an essential precursor for DNA biosynthesis. The chain is Thymidylate synthase from Salmonella typhimurium (strain LT2 / SGSC1412 / ATCC 700720).